We begin with the raw amino-acid sequence, 647 residues long: DNA mismatch repair protein MutL (647 aa).

Disordered regions lie at residues 356-391 (EGSQ…SSIS) and 407-428 (PRPQ…EALP). A compositionally biased stretch (polar residues) spans 413–423 (LRPQYQGSVTS).

Belongs to the DNA mismatch repair MutL/HexB family.

Functionally, this protein is involved in the repair of mismatches in DNA. It is required for dam-dependent methyl-directed DNA mismatch repair. May act as a 'molecular matchmaker', a protein that promotes the formation of a stable complex between two or more DNA-binding proteins in an ATP-dependent manner without itself being part of a final effector complex. The sequence is that of DNA mismatch repair protein MutL from Citrifermentans bemidjiense (strain ATCC BAA-1014 / DSM 16622 / JCM 12645 / Bem) (Geobacter bemidjiensis).